The following is a 370-amino-acid chain: Pyruvate dehydrogenase E1 component subunit alpha (370 aa).

As to quaternary structure, heterodimer of an alpha and a beta chain. It depends on thiamine diphosphate as a cofactor.

The catalysed reaction is N(6)-[(R)-lipoyl]-L-lysyl-[protein] + pyruvate + H(+) = N(6)-[(R)-S(8)-acetyldihydrolipoyl]-L-lysyl-[protein] + CO2. The pyruvate dehydrogenase complex catalyzes the overall conversion of pyruvate to acetyl-CoA and CO(2). It contains multiple copies of three enzymatic components: pyruvate dehydrogenase (E1), dihydrolipoamide acetyltransferase (E2) and lipoamide dehydrogenase (E3). In Staphylococcus aureus (strain MRSA252), this protein is Pyruvate dehydrogenase E1 component subunit alpha (pdhA).